Here is a 108-residue protein sequence, read N- to C-terminus: MNKQWLHFFSVLLLCYVIEETCSLKVEDLPLPKTYLKAVELAKKDAGKDTKLLEKGLLILKNNRRDCMTNCKLVDTCHRLSPECCPEMTPTCLKLDIVQAFLKAQGKL.

A signal peptide spans 1–24; the sequence is MNKQWLHFFSVLLLCYVIEETCSL.

This sequence belongs to the scoloptoxin-10 family. Contains 3 disulfide bonds. Expressed by the venom gland.

The protein resides in the secreted. The sequence is that of U-scoloptoxin(10)-Sm1a from Scolopendra morsitans (Tanzanian blue ringleg centipede).